We begin with the raw amino-acid sequence, 503 residues long: Probable DNA ligase (503 aa).

An ATP-binding site is contributed by Asp212. Lys214 (N6-AMP-lysine intermediate) is an active-site residue. ATP is bound by residues Arg219, Arg234, Glu263, Phe296, Arg368, and Lys374.

This sequence belongs to the ATP-dependent DNA ligase family. Mg(2+) is required as a cofactor.

The catalysed reaction is ATP + (deoxyribonucleotide)n-3'-hydroxyl + 5'-phospho-(deoxyribonucleotide)m = (deoxyribonucleotide)n+m + AMP + diphosphate.. Functionally, DNA ligase that seals nicks in double-stranded DNA during DNA replication, DNA recombination and DNA repair. The sequence is that of Probable DNA ligase from Kineococcus radiotolerans (strain ATCC BAA-149 / DSM 14245 / SRS30216).